The sequence spans 359 residues: 3-dehydroquinate synthase (359 aa).

Residues 69–74 (DAEDGK), 103–107 (GAVTD), 127–128 (TT), Lys140, and Lys149 each bind NAD(+). Zn(2+)-binding residues include Glu182, His244, and His260.

Belongs to the sugar phosphate cyclases superfamily. Dehydroquinate synthase family. It depends on NAD(+) as a cofactor. Requires Co(2+) as cofactor. The cofactor is Zn(2+).

It is found in the cytoplasm. The enzyme catalyses 7-phospho-2-dehydro-3-deoxy-D-arabino-heptonate = 3-dehydroquinate + phosphate. It participates in metabolic intermediate biosynthesis; chorismate biosynthesis; chorismate from D-erythrose 4-phosphate and phosphoenolpyruvate: step 2/7. Its function is as follows. Catalyzes the conversion of 3-deoxy-D-arabino-heptulosonate 7-phosphate (DAHP) to dehydroquinate (DHQ). The polypeptide is 3-dehydroquinate synthase (Corynebacterium pseudotuberculosis (strain C231)).